The following is a 316-amino-acid chain: Transaldolase (316 aa).

The active-site Schiff-base intermediate with substrate is Lys-132.

It belongs to the transaldolase family. Type 1 subfamily. As to quaternary structure, homodimer.

Its subcellular location is the cytoplasm. It carries out the reaction D-sedoheptulose 7-phosphate + D-glyceraldehyde 3-phosphate = D-erythrose 4-phosphate + beta-D-fructose 6-phosphate. It participates in carbohydrate degradation; pentose phosphate pathway; D-glyceraldehyde 3-phosphate and beta-D-fructose 6-phosphate from D-ribose 5-phosphate and D-xylulose 5-phosphate (non-oxidative stage): step 2/3. Functionally, transaldolase is important for the balance of metabolites in the pentose-phosphate pathway. The polypeptide is Transaldolase (Aliivibrio salmonicida (strain LFI1238) (Vibrio salmonicida (strain LFI1238))).